Consider the following 1452-residue polypeptide: Protein clueless (1452 aa).

2 disordered regions span residues 1–93 (MALE…SNGH) and 266–288 (KKTRPDSVDCTPPEYVTPGVSEP). The segment covering 8 to 24 (KNSNATATSDATATKAS) has biased composition (low complexity). Residues 42-59 (PIPNSNHQNSNQNLVNGN) show a composition bias toward polar residues. Over residues 68–77 (AKKKGKKNRN) the composition is skewed to basic residues. Ser272 is subject to Phosphoserine. Residues 426-668 (RAEDAFSSKL…RTFPPDVNFL (243 aa)) enclose the Clu domain. Disordered regions lie at residues 726 to 775 (KQSE…GDTK), 962 to 1013 (AVSS…SSVS), and 1414 to 1452 (ANNNGEAEDAVPKDVEEQKEAGTQLTNGEKAAATEATSS). Residues 750 to 766 (GADKTDVKEEKNEENEK) are compositionally biased toward basic and acidic residues. Residues 970 to 985 (KKRGNGGKHNKHKSSK) show a composition bias toward basic residues. The segment covering 990–1013 (QQQQQATGNQNGSSSGSSNGSSVS) has biased composition (low complexity). Residues 1423 to 1433 (AVPKDVEEQKE) show a composition bias toward basic and acidic residues.

The protein belongs to the CLU family.

The protein localises to the cytoplasm. MRNA-binding protein involved in proper cytoplasmic distribution of mitochondria. The protein is Protein clueless of Drosophila erecta (Fruit fly).